A 926-amino-acid chain; its full sequence is Rap guanine nucleotide exchange factor 3 (926 aa).

S79 carries the phosphoserine modification. Residues 110-186 (ATYPTLIRDR…RDAQFYRFPG (77 aa)) form the DEP domain. Residues 218–242 (TVALRKSPGQRTDEELDLIFEELVH) are interaction with PDE3B. Residues 311-314 (GQLA) and 321-322 (RA) each bind 3',5'-cyclic AMP. The tract at residues 369-388 (TSQGAGPSRPPTPGRNRYTV) is disordered. The N-terminal Ras-GEF domain maps to 384 to 521 (NRYTVMSGTP…EQYPERRRHH (138 aa)). The interval 398–422 (ELLLEAMRPDSSAHDPTETFLSDFL) is interaction with PDE3B. Phosphoserine occurs at positions 531 and 867. A Ras-GEF domain is found at 665-892 (SAKDLAGQLT…SRISTCSEQS (228 aa)).

Interacts with PDE3B and PIK3R6; form a signaling complex that regulates phosphatidylinositol 3-kinase gamma in angiogenesis. Expressed at low levels in adult brain. Strongly expressed in parts of the neonatal brain, including the septum and the thalamus.

It is found in the cytoplasm. It localises to the membrane. Functionally, guanine nucleotide exchange factor (GEF) for RAP1A and RAP2A small GTPases that is activated by binding cAMP. Through simultaneous binding of PDE3B to RAPGEF3 and PIK3R6 is assembled in a signaling complex in which it activates the PI3K gamma complex and which is involved in angiogenesis. Plays a role in the modulation of the cAMP-induced dynamic control of endothelial barrier function through a pathway that is independent on Rho-mediated signaling. Required for the actin rearrangement at cell-cell junctions, such as stress fibers and junctional actin. The protein is Rap guanine nucleotide exchange factor 3 (Rapgef3) of Rattus norvegicus (Rat).